Here is a 315-residue protein sequence, read N- to C-terminus: Calcium homeostasis modulator protein 6 (315 aa).

At 1–21 (MEKFRAVLDLHVKHHSALGYG) the chain is on the cytoplasmic side. A helical membrane pass occupies residues 22–37 (LVTLLTAGGERIFSAV). The Extracellular segment spans residues 38 to 46 (AFQCPCSAA). Intrachain disulfides connect C41-C126, C43-C155, and C139-C146. Residues 47-68 (WNLPYGLVFLLVPALALFLLGY) form a helical membrane-spanning segment. The Cytoplasmic segment spans residues 69 to 102 (VLSARTWRLLTGCCSSARASCGSALRGSLVCTQI). The helical transmembrane segment at 103-127 (SAAAALAPLTWVAVALLGGAFYECA) threads the bilayer. The Extracellular segment spans residues 128 to 169 (ATGSAAFAQRLCLGRNRSCAAELPLVPCNQAKASDVQDLLKD). The helical transmembrane segment at 170 to 192 (LKAQSQVLGWILIAVVIIILLIF) threads the bilayer. Residues 193-315 (TSVTRCLSPV…SSGINSTPEL (123 aa)) are Cytoplasmic-facing.

This sequence belongs to the CALHM family. Oligomerizes to form decameric and undecameric channels. N-glycosylated. Placenta.

The protein localises to the cell membrane. It carries out the reaction ATP(in) = ATP(out). Functionally, pore-forming subunit of an ATP-permeable channel. In response to pathogen-derived and proinflammatory stimuli, relocates from intracellular compartments to NK-dendritic cell and NK-macrophage immune synapses where it mediates ATP efflux and NK cell activation involved in antimicrobial and antitumor responses. May assemble to form gap junction channel-like structures with gating and ion conductance likely regulated by membrane lipids and voltage rather than by extracellular calcium levels. This Homo sapiens (Human) protein is Calcium homeostasis modulator protein 6.